The chain runs to 145 residues: Protein BUD31 homolog 2 (145 aa).

The protein belongs to the BUD31 (G10) family.

Its subcellular location is the nucleus. This is Protein BUD31 homolog 2 from Oryza sativa subsp. japonica (Rice).